The primary structure comprises 77 residues: uncharacterized protein (77 aa).

A disordered region spans residues 54–77 (HHGRKHKEDMEARHEQLTKGGTIL). A compositionally biased stretch (basic and acidic residues) spans 59–70 (HKEDMEARHEQL).

This is an uncharacterized protein from Escherichia coli O157:H7.